We begin with the raw amino-acid sequence, 137 residues long: Large ribosomal subunit protein uL16 (137 aa).

A compositionally biased stretch (basic residues) spans 1 to 17 (MLQPKRTKFRKQMKGRN). The disordered stretch occupies residues 1–22 (MLQPKRTKFRKQMKGRNRGLAQ).

This sequence belongs to the universal ribosomal protein uL16 family. As to quaternary structure, part of the 50S ribosomal subunit.

In terms of biological role, binds 23S rRNA and is also seen to make contacts with the A and possibly P site tRNAs. This chain is Large ribosomal subunit protein uL16, found in Teredinibacter turnerae (strain ATCC 39867 / T7901).